We begin with the raw amino-acid sequence, 251 residues long: Aliphatic sulfonates import ATP-binding protein SsuB (251 aa).

The ABC transporter domain occupies valine 3–glutamine 231. Glycine 39–serine 46 contributes to the ATP binding site.

The protein belongs to the ABC transporter superfamily. Aliphatic sulfonates importer (TC 3.A.1.17.2) family. As to quaternary structure, the complex is composed of two ATP-binding proteins (SsuB), two transmembrane proteins (SsuC) and a solute-binding protein (SsuA).

It is found in the cell membrane. It catalyses the reaction ATP + H2O + aliphatic sulfonate-[sulfonate-binding protein]Side 1 = ADP + phosphate + aliphatic sulfonateSide 2 + [sulfonate-binding protein]Side 1.. Its function is as follows. Part of the ABC transporter complex SsuABC involved in aliphatic sulfonates import. Responsible for energy coupling to the transport system. In Bacillus thuringiensis subsp. konkukian (strain 97-27), this protein is Aliphatic sulfonates import ATP-binding protein SsuB.